We begin with the raw amino-acid sequence, 427 residues long: Serine--tRNA ligase (427 aa).

Residue 233 to 235 (TAE) coordinates L-serine. 264–266 (RSE) provides a ligand contact to ATP. Residue glutamate 287 coordinates L-serine. Position 351–354 (351–354 (EISS)) interacts with ATP. Position 386 (serine 386) interacts with L-serine.

It belongs to the class-II aminoacyl-tRNA synthetase family. Type-1 seryl-tRNA synthetase subfamily. Homodimer. The tRNA molecule binds across the dimer.

The protein localises to the cytoplasm. The catalysed reaction is tRNA(Ser) + L-serine + ATP = L-seryl-tRNA(Ser) + AMP + diphosphate + H(+). It carries out the reaction tRNA(Sec) + L-serine + ATP = L-seryl-tRNA(Sec) + AMP + diphosphate + H(+). It participates in aminoacyl-tRNA biosynthesis; selenocysteinyl-tRNA(Sec) biosynthesis; L-seryl-tRNA(Sec) from L-serine and tRNA(Sec): step 1/1. Functionally, catalyzes the attachment of serine to tRNA(Ser). Is also able to aminoacylate tRNA(Sec) with serine, to form the misacylated tRNA L-seryl-tRNA(Sec), which will be further converted into selenocysteinyl-tRNA(Sec). The polypeptide is Serine--tRNA ligase (Dechloromonas aromatica (strain RCB)).